The sequence spans 938 residues: Isoleucine--tRNA ligase (938 aa).

Positions 58–68 (PYANGNIHIGH) match the 'HIGH' region motif. L-isoleucyl-5'-AMP is bound at residue Glu563. The short motif at 604–608 (KMSKS) is the 'KMSKS' region element. Lys607 is a binding site for ATP. Residues Cys903, Cys906, Cys921, and Cys924 each coordinate Zn(2+).

The protein belongs to the class-I aminoacyl-tRNA synthetase family. IleS type 1 subfamily. As to quaternary structure, monomer. Requires Zn(2+) as cofactor.

It localises to the cytoplasm. The catalysed reaction is tRNA(Ile) + L-isoleucine + ATP = L-isoleucyl-tRNA(Ile) + AMP + diphosphate. Its function is as follows. Catalyzes the attachment of isoleucine to tRNA(Ile). As IleRS can inadvertently accommodate and process structurally similar amino acids such as valine, to avoid such errors it has two additional distinct tRNA(Ile)-dependent editing activities. One activity is designated as 'pretransfer' editing and involves the hydrolysis of activated Val-AMP. The other activity is designated 'posttransfer' editing and involves deacylation of mischarged Val-tRNA(Ile). In Buchnera aphidicola subsp. Schizaphis graminum (strain Sg), this protein is Isoleucine--tRNA ligase.